The sequence spans 171 residues: NADH-quinone oxidoreductase subunit B 2 (171 aa).

Residues cysteine 37, cysteine 38, cysteine 102, and cysteine 132 each coordinate [4Fe-4S] cluster.

This sequence belongs to the complex I 20 kDa subunit family. In terms of assembly, NDH-1 is composed of 14 different subunits. Subunits NuoB, C, D, E, F, and G constitute the peripheral sector of the complex. [4Fe-4S] cluster serves as cofactor.

The protein resides in the cell inner membrane. It carries out the reaction a quinone + NADH + 5 H(+)(in) = a quinol + NAD(+) + 4 H(+)(out). Functionally, NDH-1 shuttles electrons from NADH, via FMN and iron-sulfur (Fe-S) centers, to quinones in the respiratory chain. Couples the redox reaction to proton translocation (for every two electrons transferred, four hydrogen ions are translocated across the cytoplasmic membrane), and thus conserves the redox energy in a proton gradient. The sequence is that of NADH-quinone oxidoreductase subunit B 2 from Chromobacterium violaceum (strain ATCC 12472 / DSM 30191 / JCM 1249 / CCUG 213 / NBRC 12614 / NCIMB 9131 / NCTC 9757 / MK).